The sequence spans 608 residues: Histone-arginine methyltransferase CARM1 (608 aa).

Ala2 is subject to N-acetylalanine. The tract at residues 27–138 (ATVSVFPGAR…GHTLERSVFS (112 aa)) is interaction with C9orf72. Positions 146 to 453 (AVQYFQFYGY…KRQSYDISIV (308 aa)) constitute an SAM-dependent MTase PRMT-type domain. Positions 159, 168, 192, and 214 each coordinate S-adenosyl-L-methionine. Phosphoserine is present on Ser216. Residue Lys227 forms a Glycyl lysine isopeptide (Lys-Gly) (interchain with G-Cter in ubiquitin) linkage. Positions 243 and 271 each coordinate S-adenosyl-L-methionine. The segment at 346-379 (RILMAKSVKYTVNFLEAKEGDLHRIEIPFKFHML) is required for nuclear translocation. Residues 499–608 (TGSTYNLSSG…IPTNTMHYGS (110 aa)) form a transactivation domain region. At Arg550 the chain carries Dimethylated arginine.

It belongs to the class I-like SAM-binding methyltransferase superfamily. Protein arginine N-methyltransferase family. In terms of assembly, homodimer. Interacts with NR1H4. Interacts with SNRPC. Interacts with the C-terminus of NCOA2/GRIP1, NCO3/ACTR and NCOA1/SRC1. Part of a complex consisting of CARM1, EP300/P300 and NCOA2/GRIP1. Interacts with FLII, TP53, myogenic factor MEF2, EP300/P300, TRIM24, CREBBP and CTNNB1. Interacts with RELA. Identified in a complex containing CARM1, TRIM24 and NCOA2/GRIP1. Interacts with NCOA3/SRC3. Interacts with SKP2. Interacts (via PH domain-like fold) with C9orf72. Interacts with PARP1; promoting PARP1 recruimtent to replication forks. As to quaternary structure, (Microbial infection) Interacts with HTLV-1 protein Tax. In terms of processing, auto-methylated on Arg-550. Methylation enhances transcription coactivator activity. Methylation is required for its role in the regulation of pre-mRNA alternative splicing. Post-translationally, phosphorylation at Ser-216 is strongly increased during mitosis, and decreases rapidly to a very low, basal level after entry into the G1 phase of the cell cycle. Phosphorylation at Ser-216 may promote location in the cytosol. Phosphorylation at Ser-216 interferes with S-adenosyl-L-methionine binding and strongly reduces methyltransferase activity. Ubiquitinated by E3 ubiquitin-protein ligase complex containing FBXO9 at Lys-227; leading to proteasomal degradation. As to expression, overexpressed in prostate adenocarcinomas and high-grade prostatic intraepithelial neoplasia.

It is found in the nucleus. Its subcellular location is the cytoplasm. It localises to the chromosome. The catalysed reaction is L-arginyl-[protein] + 2 S-adenosyl-L-methionine = N(omega),N(omega)-dimethyl-L-arginyl-[protein] + 2 S-adenosyl-L-homocysteine + 2 H(+). Its activity is regulated as follows. Methylation of H3R17 (H3R17me) by CARM1 is stimulated by preacetylation of H3 'Lys-18' (H3K18ac) H3 'Lys-23' (H3K23ac) by EP300 and blocked by citrullination of H3 'Arg-17' (H3R17ci) by PADI4. Its function is as follows. Methylates (mono- and asymmetric dimethylation) the guanidino nitrogens of arginyl residues in several proteins involved in DNA packaging, transcription regulation, pre-mRNA splicing, and mRNA stability. Recruited to promoters upon gene activation together with histone acetyltransferases from EP300/P300 and p160 families, methylates histone H3 at 'Arg-17' (H3R17me), forming mainly asymmetric dimethylarginine (H3R17me2a), leading to activation of transcription via chromatin remodeling. During nuclear hormone receptor activation and TCF7L2/TCF4 activation, acts synergically with EP300/P300 and either one of the p160 histone acetyltransferases NCOA1/SRC1, NCOA2/GRIP1 and NCOA3/ACTR or CTNNB1/beta-catenin to activate transcription. During myogenic transcriptional activation, acts together with NCOA3/ACTR as a coactivator for MEF2C. During monocyte inflammatory stimulation, acts together with EP300/P300 as a coactivator for NF-kappa-B. Acts as a coactivator for PPARG, promotes adipocyte differentiation and the accumulation of brown fat tissue. Plays a role in the regulation of pre-mRNA alternative splicing by methylation of splicing factors. Also seems to be involved in p53/TP53 transcriptional activation. Methylates EP300/P300, both at 'Arg-2142', which may loosen its interaction with NCOA2/GRIP1, and at 'Arg-580' and 'Arg-604' in the KIX domain, which impairs its interaction with CREB and inhibits CREB-dependent transcriptional activation. Also methylates arginine residues in RNA-binding proteins PABPC1, ELAVL1 and ELAV4, which may affect their mRNA-stabilizing properties and the half-life of their target mRNAs. Acts as a transcriptional coactivator of ACACA/acetyl-CoA carboxylase by enriching H3R17 methylation at its promoter, thereby positively regulating fatty acid synthesis. Independently of its methyltransferase activity, involved in replication fork progression: promotes PARP1 recruitment to replication forks, leading to poly-ADP-ribosylation of chromatin at replication forks and reduced fork speed. The polypeptide is Histone-arginine methyltransferase CARM1 (CARM1) (Homo sapiens (Human)).